Here is a 263-residue protein sequence, read N- to C-terminus: 4-hydroxy-2-oxo-heptane-1,7-dioate aldolase (263 aa).

His-45 serves as the catalytic Proton acceptor. Gln-147 provides a ligand contact to substrate. Position 149 (Glu-149) interacts with a divalent metal cation. Substrate is bound by residues Ala-174 and Asp-175. Asp-175 is a binding site for a divalent metal cation.

This sequence belongs to the HpcH/HpaI aldolase family. As to quaternary structure, homohexamer; trimer of dimers. The cofactor is a divalent metal cation.

The enzyme catalyses 4-hydroxy-2-oxoheptanedioate = succinate semialdehyde + pyruvate. Its pathway is aromatic compound metabolism; 4-hydroxyphenylacetate degradation; pyruvate and succinate semialdehyde from 4-hydroxyphenylacetate: step 7/7. Functionally, catalyzes the reversible retro-aldol cleavage of 4-hydroxy-2-ketoheptane-1,7-dioate (HKHD) to pyruvate and succinic semialdehyde. This chain is 4-hydroxy-2-oxo-heptane-1,7-dioate aldolase, found in Salmonella paratyphi A (strain ATCC 9150 / SARB42).